The primary structure comprises 559 residues: CTP synthase (559 aa).

Residues 1–283 (MSTSRTTTNN…DTFLIRRLDL (283 aa)) are amidoligase domain. S25 is a CTP binding site. S25 is a UTP binding site. ATP contacts are provided by residues 26-31 (SLGKGL) and D83. Residues D83 and E157 each coordinate Mg(2+). Residues 164 to 166 (DIE), 204 to 209 (KTKPTQ), and K240 each bind CTP. UTP is bound by residues 204–209 (KTKPTQ) and K240. Residues 308 to 557 (TVGIVGKYVD…VAAALAAAVT (250 aa)) enclose the Glutamine amidotransferase type-1 domain. G371 lines the L-glutamine pocket. C398 acts as the Nucleophile; for glutamine hydrolysis in catalysis. L-glutamine is bound by residues 399 to 402 (LGLQ), E421, and R482. Active-site residues include H530 and E532.

This sequence belongs to the CTP synthase family. Homotetramer.

The catalysed reaction is UTP + L-glutamine + ATP + H2O = CTP + L-glutamate + ADP + phosphate + 2 H(+). The enzyme catalyses L-glutamine + H2O = L-glutamate + NH4(+). It catalyses the reaction UTP + NH4(+) + ATP = CTP + ADP + phosphate + 2 H(+). It participates in pyrimidine metabolism; CTP biosynthesis via de novo pathway; CTP from UDP: step 2/2. Allosterically activated by GTP, when glutamine is the substrate; GTP has no effect on the reaction when ammonia is the substrate. The allosteric effector GTP functions by stabilizing the protein conformation that binds the tetrahedral intermediate(s) formed during glutamine hydrolysis. Inhibited by the product CTP, via allosteric rather than competitive inhibition. In terms of biological role, catalyzes the ATP-dependent amination of UTP to CTP with either L-glutamine or ammonia as the source of nitrogen. Regulates intracellular CTP levels through interactions with the four ribonucleotide triphosphates. The polypeptide is CTP synthase (Corynebacterium efficiens (strain DSM 44549 / YS-314 / AJ 12310 / JCM 11189 / NBRC 100395)).